The following is a 1189-amino-acid chain: Disabled homolog 2-interacting protein (1189 aa).

Residues 1 to 75 (MSAGGSARKS…EPSAATPFRV (75 aa)) form a disordered region. Residues 20-38 (LLRRPRLQRQRSRSRSRTR) are compositionally biased toward basic residues. Residues 39–49 (PARESPQERPG) show a composition bias toward basic and acidic residues. One can recognise a PH domain in the interval 101 to 202 (SFRHILPGFR…WMENLRRAVH (102 aa)). Positions 193–311 (WMENLRRAVH…AGRQFVEKWY (119 aa)) constitute a C2 domain. The 209-residue stretch at 387-595 (GKVKDFLTDL…TNMQRFLLEI (209 aa)) folds into the Ras-GAP domain. Residues 646–943 (LRDVHTALST…RTPPNLLSTL (298 aa)) form a necessary for interaction with AKT1 region. Over residues 653–668 (LSTPGSGQLPGTNDLA) the composition is skewed to polar residues. Disordered regions lie at residues 653–678 (LSTP…SSSI) and 715–742 (RSSG…MANG). The span at 669-678 (STPGSGSSSI) shows a compositional bias: low complexity. Over residues 715–731 (RSSGVQPSPARSSSYSE) the composition is skewed to polar residues. Phosphoserine; by MAP3K5 and RIPK1 is present on Ser-728. A Phosphoserine modification is found at Ser-747. Disordered stretches follow at residues 803–823 (AGQT…PQLL), 843–865 (PRGL…NSEE), 895–998 (SLTE…SPNA), 1015–1035 (EDEG…KDEL), and 1164–1189 (RNGI…SSNC). Over residues 852–865 (EGHSSLSSHSNSEE) the composition is skewed to low complexity. The span at 919–931 (QPPPPPPPPPPAP) shows a compositional bias: pro residues. Composition is skewed to polar residues over residues 938–955 (NLLS…TLAS) and 966–976 (RLRQQSSSSKG). 2 positions are modified to phosphoserine: Ser-978 and Ser-995. Residues 1023–1035 (PPHRDRLRSKDEL) are compositionally biased toward basic and acidic residues. Positions 1026 to 1159 (RDRLRSKDEL…SALTQLKERY (134 aa)) form a coiled coil.

In terms of assembly, on plasma membrane, exists in an inactive form complexed with TNFR1; in response to TNF-alpha, dissociates from TNFR1 complex, translocates to cytoplasm and forms part of an intracellular signaling complex comprising TRADD, RIPK1, TRAF2 and MAP3K5. Interacts with DAB1. Interacts (via NPXY motif) with DAB2 (via PID domain). Interacts (via PH domain) with ERN1. Part of a cytoplasmic complex made of HIPK1, DAB2IP and MAP3K5 in response to TNF-alpha; this complex formation promotes MAP3K5-JNK activation and subsequent apoptosis. Interacts (via N-terminal domain) with JAK2; the interaction occurs in a IFNG/IFN-gamma-dependent manner and inhibits JAK2 autophosphorylation activity. Interacts (via C2 domain) with GSK3B; the interaction stimulates GSK3B kinase activation. Interacts (via C2 domain) with PPP2CA. Interacts (via proline-rich motif) with a regulatory p85 subunit (via SH3 domain) of the PI3K complex; the interaction inhibits the PI3K-AKT complex activity in a TNF-alpha-dependent manner in prostate cancer (PCa) cells. Interacts with AKT1; the interaction is increased in a TNF-alpha-induced manner. Interacts (via C2 domain and active form preferentially) with KDR/VEGFR2 (tyrosine-phosphorylated active form preferentially); the interaction occurs at the late phase of VEGFA response and inhibits KDR/VEGFR2 activity. Interacts (via N-terminus C2 domain) with MAP3K5 ('Ser-966' dephosphorylated form preferentially); the interaction occurs in a TNF-alpha-induced manner. Interacts (via Ras-GAP domain) with the catalytic subunit of protein phosphatase PP2A; the interaction occurs in resting endothelial cells, is further enhanced by TNF-alpha stimulation and is required to bridge PP2A to MAP3K5. Interacts (via C-terminus PER domain) with TRAF2 (via zinc fingers); the interaction occurs in a TNF-alpha-dependent manner. Interacts with 14-3-3 proteins; the interaction occurs in a TNF-alpha-dependent manner. Interacts (via Ras-GAP domain) with RIPK1 (via kinase domain); the interaction occurs in a TNF-alpha-dependent manner. Interacts with RAB40C; acts as a GAP for RAB40C. In terms of processing, in response to TNF-alpha-induction, phosphorylated at Ser-728; phosphorylation leads to a conformational change, and thus, increases its association with 14-3-3 proteins, MAP3K5, RIPK1 and TRAF2 in endothelial cells; also stimulates regulatory p85 subunit sequestring and PI3K-p85 complex activity inhibition. As to expression, expressed in endothelial and vascular smooth muscle cells (VSMCs). Expressed in prostate epithelial but poorly in prostate cancer cells. Poorly expressed in medulloblastoma cells compared to cerebellar precursor proliferating progenitor cells (at protein level). Low expression in prostate. Down-regulated in prostate cancer.

It localises to the cytoplasm. The protein localises to the cell membrane. It is found in the membrane. The protein resides in the cell projection. Its subcellular location is the dendrite. Functionally, functions as a scaffold protein implicated in the regulation of a large spectrum of both general and specialized signaling pathways. Involved in several processes such as innate immune response, inflammation and cell growth inhibition, apoptosis, cell survival, angiogenesis, cell migration and maturation. Also plays a role in cell cycle checkpoint control; reduces G1 phase cyclin levels resulting in G0/G1 cell cycle arrest. Mediates signal transduction by receptor-mediated inflammatory signals, such as the tumor necrosis factor (TNF), interferon (IFN) or lipopolysaccharide (LPS). Modulates the balance between phosphatidylinositol 3-kinase (PI3K)-AKT-mediated cell survival and apoptosis stimulated kinase (MAP3K5)-JNK signaling pathways; sequesters both AKT1 and MAP3K5 and counterbalances the activity of each kinase by modulating their phosphorylation status in response to pro-inflammatory stimuli. Acts as a regulator of the endoplasmic reticulum (ER) unfolded protein response (UPR) pathway; specifically involved in transduction of the ER stress-response to the JNK cascade through ERN1. Mediates TNF-alpha-induced apoptosis activation by facilitating dissociation of inhibitor 14-3-3 from MAP3K5; recruits the PP2A phosphatase complex which dephosphorylates MAP3K5 on 'Ser-966', leading to the dissociation of 13-3-3 proteins and activation of the MAP3K5-JNK signaling pathway in endothelial cells. Also mediates TNF/TRAF2-induced MAP3K5-JNK activation, while it inhibits CHUK-NF-kappa-B signaling. Acts a negative regulator in the IFN-gamma-mediated JAK-STAT signaling cascade by inhibiting smooth muscle cell (VSMCs) proliferation and intimal expansion, and thus, prevents graft arteriosclerosis (GA). Acts as a GTPase-activating protein (GAP) for the ADP ribosylation factor 6 (ARF6), Ras and RAB40C. Promotes hydrolysis of the ARF6-bound GTP and thus, negatively regulates phosphatidylinositol 4,5-bisphosphate (PIP2)-dependent TLR4-TIRAP-MyD88 and NF-kappa-B signaling pathways in endothelial cells in response to lipopolysaccharides (LPS). Binds specifically to phosphatidylinositol 4-phosphate (PtdIns4P) and phosphatidylinositol 3-phosphate (PtdIns3P). In response to vascular endothelial growth factor (VEGFA), acts as a negative regulator of the VEGFR2-PI3K-mediated angiogenic signaling pathway by inhibiting endothelial cell migration and tube formation. In the developing brain, promotes both the transition from the multipolar to the bipolar stage and the radial migration of cortical neurons from the ventricular zone toward the superficial layer of the neocortex in a glial-dependent locomotion process. Probable downstream effector of the Reelin signaling pathway; promotes Purkinje cell (PC) dendrites development and formation of cerebellar synapses. Also functions as a tumor suppressor protein in prostate cancer progression; prevents cell proliferation and epithelial-to-mesenchymal transition (EMT) through activation of the glycogen synthase kinase-3 beta (GSK3B)-induced beta-catenin and inhibition of PI3K-AKT and Ras-MAPK survival downstream signaling cascades, respectively. The protein is Disabled homolog 2-interacting protein of Homo sapiens (Human).